A 334-amino-acid chain; its full sequence is Immune-associated nucleotide-binding protein 3 (334 aa).

One can recognise an AIG1-type G domain in the interval 11 to 219 (KAVKNIVLVG…FRGKMYLEIK (209 aa)). A G1 region spans residues 20–27 (GRTGNGKS). GTP contacts are provided by residues 20-28 (GRTGNGKSA) and S41. The G2 stretch occupies residues 47-51 (GVTKT). The interval 69–72 (DTPG) is G3. The interval 139 to 142 (TGGD) is G4. Residues 178-180 (NNM) are G5. N179 is a binding site for GTP. The stretch at 272 to 306 (SAAHERMVSMLNENLENAHRENIDLRKAHDHEQKK) forms a coiled coil.

The protein belongs to the TRAFAC class TrmE-Era-EngA-EngB-Septin-like GTPase superfamily. AIG1/Toc34/Toc159-like paraseptin GTPase family. IAN subfamily. In terms of tissue distribution, mostly expressed in pollen. Also detected in lateral roots and radicles.

The protein is Immune-associated nucleotide-binding protein 3 of Arabidopsis thaliana (Mouse-ear cress).